Consider the following 380-residue polypeptide: Ribosomal RNA large subunit methyltransferase G (380 aa).

This sequence belongs to the methyltransferase superfamily. RlmG family.

The protein localises to the cytoplasm. The catalysed reaction is guanosine(1835) in 23S rRNA + S-adenosyl-L-methionine = N(2)-methylguanosine(1835) in 23S rRNA + S-adenosyl-L-homocysteine + H(+). In terms of biological role, specifically methylates the guanine in position 1835 (m2G1835) of 23S rRNA. The protein is Ribosomal RNA large subunit methyltransferase G of Streptomyces avermitilis (strain ATCC 31267 / DSM 46492 / JCM 5070 / NBRC 14893 / NCIMB 12804 / NRRL 8165 / MA-4680).